A 537-amino-acid polypeptide reads, in one-letter code: tRNA(His) guanylyltransferase 2 (537 aa).

Mg(2+) is bound by residues Asp-307, Gly-308, and Asp-354. GTP-binding positions include 307–312 and 353–354; these read DGCHFH and SD.

This sequence belongs to the tRNA(His) guanylyltransferase family. The cofactor is Mg(2+).

The protein resides in the nucleus. The protein localises to the nucleoplasm. It catalyses the reaction a 5'-end ribonucleotide-tRNA(His) + GTP + ATP + H2O = a 5'-end phospho-guanosine-ribonucleotide-tRNA(His) + AMP + 2 diphosphate + H(+). In terms of biological role, adds a GMP to the 5'-end of tRNA(His) after transcription and RNase P cleavage. The polypeptide is tRNA(His) guanylyltransferase 2 (THG2) (Arabidopsis thaliana (Mouse-ear cress)).